The chain runs to 76 residues: Exodeoxyribonuclease 7 small subunit (76 aa).

The protein belongs to the XseB family. As to quaternary structure, heterooligomer composed of large and small subunits.

The protein resides in the cytoplasm. The enzyme catalyses Exonucleolytic cleavage in either 5'- to 3'- or 3'- to 5'-direction to yield nucleoside 5'-phosphates.. Bidirectionally degrades single-stranded DNA into large acid-insoluble oligonucleotides, which are then degraded further into small acid-soluble oligonucleotides. In Bacillus cytotoxicus (strain DSM 22905 / CIP 110041 / 391-98 / NVH 391-98), this protein is Exodeoxyribonuclease 7 small subunit.